Consider the following 42-residue polypeptide: Large ribosomal subunit protein bL36 (42 aa).

Belongs to the bacterial ribosomal protein bL36 family.

The protein is Large ribosomal subunit protein bL36 of Anaplasma phagocytophilum (strain HZ).